The following is a 115-amino-acid chain: Hydrogenase maturation factor HypA (115 aa).

His2 contacts Ni(2+). Zn(2+)-binding residues include Cys74, Cys77, Cys90, and Cys93.

It belongs to the HypA/HybF family.

Involved in the maturation of [NiFe] hydrogenases. Required for nickel insertion into the metal center of the hydrogenase. In Desulfosudis oleivorans (strain DSM 6200 / JCM 39069 / Hxd3) (Desulfococcus oleovorans), this protein is Hydrogenase maturation factor HypA.